A 277-amino-acid polypeptide reads, in one-letter code: MSLEDAFDEPAFVPYLAAGDPDFESSLAYVEALARGGADVIELGLPFSEPIAEGPTIQQAVVRSLEGGMTPERFFEFVETLDVDVPLVCMTYYNLIYQYGPAGSQPVVPFVERAAEVGLKGFVVPDLPAEEAGPLREACDEYGLDLVFIVAPTTAGDRLERMMEQVSGYVYVQARLGVTGAREDVSDRTAETLARLEAYDVPKAVGFGISSGEQAEAVVAAGADGVIVGSALVDIVAEGHENGDAPDVVADRLESLARELKSGAVAGKQRQPGPERT.

Active-site proton acceptor residues include E42 and E53.

This sequence belongs to the TrpA family. Tetramer of two alpha and two beta chains.

It catalyses the reaction (1S,2R)-1-C-(indol-3-yl)glycerol 3-phosphate + L-serine = D-glyceraldehyde 3-phosphate + L-tryptophan + H2O. Its pathway is amino-acid biosynthesis; L-tryptophan biosynthesis; L-tryptophan from chorismate: step 5/5. The alpha subunit is responsible for the aldol cleavage of indoleglycerol phosphate to indole and glyceraldehyde 3-phosphate. This chain is Tryptophan synthase alpha chain, found in Natronomonas pharaonis (strain ATCC 35678 / DSM 2160 / CIP 103997 / JCM 8858 / NBRC 14720 / NCIMB 2260 / Gabara) (Halobacterium pharaonis).